A 557-amino-acid polypeptide reads, in one-letter code: TBCC domain-containing protein 1 (557 aa).

The C-CAP/cofactor C-like domain occupies 290–435 (TTKRAKIACN…LEDHMARTGL (146 aa)).

It belongs to the TBCC family.

The protein localises to the cytoplasm. It is found in the cytoskeleton. Its subcellular location is the microtubule organizing center. The protein resides in the centrosome. It localises to the spindle pole. In terms of biological role, plays a role in the regulation of centrosome and Golgi apparatus positioning, with consequences on cell shape and cell migration. The polypeptide is TBCC domain-containing protein 1 (TBCCD1) (Bos taurus (Bovine)).